Consider the following 498-residue polypeptide: Glutathione synthetase large chain (498 aa).

R128 is a substrate binding site. E146 lines the ATP pocket. Residues E146 and N148 each contribute to the Mg(2+) site. Substrate-binding positions include 150–153 (ISVS), 233–235 (ERN), Q239, and 291–294 (RVGY). K330 provides a ligand contact to ATP. S356 is modified (phosphoserine). ATP-binding positions include 387-396 (KPQREGGGNN), Y398, 420-423 (MRYI), and E446. E391 lines the Mg(2+) pocket. R473 provides a ligand contact to substrate. K475 and E481 together coordinate ATP. Residue 484–485 (VA) participates in substrate binding.

This sequence belongs to the eukaryotic GSH synthase family. In terms of assembly, heterodimer composed of a large and a small chain. Mg(2+) serves as cofactor.

It carries out the reaction gamma-L-glutamyl-L-cysteine + glycine + ATP = glutathione + ADP + phosphate + H(+). It functions in the pathway sulfur metabolism; glutathione biosynthesis; glutathione from L-cysteine and L-glutamate: step 2/2. The polypeptide is Glutathione synthetase large chain (gsa1) (Schizosaccharomyces pombe (strain 972 / ATCC 24843) (Fission yeast)).